A 319-amino-acid chain; its full sequence is Acetyl esterase (319 aa).

The Involved in the stabilization of the negatively charged intermediate by the formation of the oxyanion hole motif lies at 91-93; it reads HGG. Catalysis depends on residues serine 165, aspartate 262, and histidine 292.

The protein belongs to the 'GDXG' lipolytic enzyme family. As to quaternary structure, homodimer. Interacts with MalT and MelA.

It is found in the cytoplasm. In terms of biological role, displays esterase activity towards short chain fatty esters (acyl chain length of up to 8 carbons). Able to hydrolyze triacetylglycerol (triacetin) and tributyrylglycerol (tributyrin), but not trioleylglycerol (triolein) or cholesterol oleate. Negatively regulates MalT activity by antagonizing maltotriose binding. Inhibits MelA galactosidase activity. In Escherichia coli O157:H7, this protein is Acetyl esterase.